A 296-amino-acid chain; its full sequence is Glucokinase (296 aa).

It belongs to the ROK (NagC/XylR) family. In terms of assembly, homodimer. It depends on a divalent metal cation as a cofactor.

The enzyme catalyses D-glucose + ATP = D-glucose 6-phosphate + ADP + H(+). Catalyzes the phosphorylation of D-glucose to D-glucose 6-phosphate using ATP as the phosphate donor. Has a broad hexose specificity, and in addition to glucose, which shows the highest catalytic efficiency, it can also phosphorylate fructose, mannose, galactose and sorbitol. Can also use CTP, GTP or UTP as phosphoryl donor. This Pyrobaculum calidifontis (strain DSM 21063 / JCM 11548 / VA1) protein is Glucokinase.